We begin with the raw amino-acid sequence, 257 residues long: Low affinity immunoglobulin gamma Fc region receptor III-A (257 aa).

A signal peptide spans 1–19 (MWQLLSPTALLLLVSVPGT). At 20 to 209 (HAEDPPKSVV…ILSFFLPWHQ (190 aa)) the chain is on the extracellular side. Ig-like C2-type domains lie at 25 to 104 (PKSV…LRLE) and 108 to 190 (GWLL…VKVT). 2 disulfide bridges follow: Cys48-Cys90 and Cys129-Cys173. N-linked (GlcNAc...) asparagine glycans are attached at residues Asn64, Asn134, and Asn162. Asp181 carries N-linked (GlcNAc...) asparagine; in variant N-181 glycosylation. Residues 210–230 (IIFCLVMGFLFAVDTGLYFSV) traverse the membrane as a helical segment. At 231–257 (RKVLRSSKEDWRNGKVTWSRDPADKGG) the chain is on the cytoplasmic side.

In terms of assembly, forms a heterooligomeric complex with ITAM-containing signaling subunits FCER1G. Interacts (via transmembrane domain) with signaling subunits; this interaction is a prerequisite for receptor complex expression on the cell surface and intracellular signal transduction. Binds the Fc region of antigen-complexed IgG. Expressed in polymorphonuclear leukocytes, pulmonary alveolar macrophages and peripheral blood mononuclear cells (at protein level). Found in spleen, and at very low levels in lymph nodes but not in thymus or liver.

The protein localises to the cell membrane. In terms of biological role, receptor for the invariable Fc fragment of immunoglobulin gamma (IgG). Optimally activated upon binding of clustered antigen-IgG complexes displayed on cell surfaces, triggers lysis of antibody-coated cells, a process known as antibody-dependent cellular cytotoxicity (ADCC). Does not bind free monomeric IgG, thus avoiding inappropriate effector cell activation in the absence of antigenic trigger. Mediates IgG effector functions on natural killer (NK) cells. Binds antigen-IgG complexes generated upon infection and triggers NK cell-dependent cytokine production and degranulation to limit viral load and propagation. Fc-binding subunit that associates with FCER1G adapter to form functional signaling complexes. Following the engagement of antigen-IgG complexes, triggers phosphorylation of immunoreceptor tyrosine-based activation motif (ITAM)-containing adapter with subsequent activation of phosphatidylinositol 3-kinase signaling and sustained elevation of intracellular calcium that ultimately drive NK cell activation. Mediates enhanced ADCC in response to afucosylated IgGs. In Sus scrofa (Pig), this protein is Low affinity immunoglobulin gamma Fc region receptor III-A.